Reading from the N-terminus, the 177-residue chain is Ribosome maturation factor RimM (177 aa).

The PRC barrel domain maps to 100-177 (EDEYYWSDLV…TVLVAWPSDY (78 aa)).

It belongs to the RimM family. Binds ribosomal protein uS19.

It is found in the cytoplasm. Functionally, an accessory protein needed during the final step in the assembly of 30S ribosomal subunit, possibly for assembly of the head region. Essential for efficient processing of 16S rRNA. May be needed both before and after RbfA during the maturation of 16S rRNA. It has affinity for free ribosomal 30S subunits but not for 70S ribosomes. This is Ribosome maturation factor RimM from Psychrobacter arcticus (strain DSM 17307 / VKM B-2377 / 273-4).